Here is a 297-residue protein sequence, read N- to C-terminus: Bifunctional protein FolD 2 (297 aa).

Residues 172 to 174, Thr199, and Val240 each bind NADP(+); that span reads GRG.

The protein belongs to the tetrahydrofolate dehydrogenase/cyclohydrolase family. As to quaternary structure, homodimer.

It catalyses the reaction (6R)-5,10-methylene-5,6,7,8-tetrahydrofolate + NADP(+) = (6R)-5,10-methenyltetrahydrofolate + NADPH. The catalysed reaction is (6R)-5,10-methenyltetrahydrofolate + H2O = (6R)-10-formyltetrahydrofolate + H(+). It functions in the pathway one-carbon metabolism; tetrahydrofolate interconversion. Its function is as follows. Catalyzes the oxidation of 5,10-methylenetetrahydrofolate to 5,10-methenyltetrahydrofolate and then the hydrolysis of 5,10-methenyltetrahydrofolate to 10-formyltetrahydrofolate. The protein is Bifunctional protein FolD 2 of Paenarthrobacter aurescens (strain TC1).